Here is a 650-residue protein sequence, read N- to C-terminus: Gamma-tubulin complex component 4 homolog (650 aa).

Ser214 bears the Phosphoserine mark. Thr216 is modified (phosphothreonine). Position 218 is a phosphoserine (Ser218).

The protein belongs to the TUBGCP family.

It localises to the cytoplasm. The protein resides in the cytoskeleton. The protein localises to the microtubule organizing center. It is found in the centrosome. Its function is as follows. Gamma-tubulin complex is necessary for microtubule nucleation at the centrosome. In Drosophila melanogaster (Fruit fly), this protein is Gamma-tubulin complex component 4 homolog (Grip75).